Consider the following 520-residue polypeptide: Peptide chain release factor 3 (520 aa).

Positions 8–277 constitute a tr-type G domain; that stretch reads ESRKTFAIIS…FAPMPNARQT (270 aa). GTP-binding positions include 17–24, 85–89, and 139–142; these read SHPDAGKT, DTPGH, and NKLD.

This sequence belongs to the TRAFAC class translation factor GTPase superfamily. Classic translation factor GTPase family. PrfC subfamily.

The protein localises to the cytoplasm. Increases the formation of ribosomal termination complexes and stimulates activities of RF-1 and RF-2. It binds guanine nucleotides and has strong preference for UGA stop codons. It may interact directly with the ribosome. The stimulation of RF-1 and RF-2 is significantly reduced by GTP and GDP, but not by GMP. The protein is Peptide chain release factor 3 of Staphylococcus aureus (strain USA300 / TCH1516).